The sequence spans 491 residues: Probable CtpA-like serine protease (491 aa).

A disordered region spans residues 1–22 (MSESKDTTEVNQEVNEKASSQS). The span at 9–22 (EVNQEVNEKASSQS) shows a compositional bias: polar residues. A helical transmembrane segment spans residues 34–54 (FIIILIVTILVTAMIAVFATI). One can recognise a PDZ domain in the interval 119-201 (TKSFNEDVSG…TKVTLTIERG (83 aa)). Active-site charge relay system residues include S324, D335, and K349.

This sequence belongs to the peptidase S41A family.

Its subcellular location is the cell membrane. In Staphylococcus saprophyticus subsp. saprophyticus (strain ATCC 15305 / DSM 20229 / NCIMB 8711 / NCTC 7292 / S-41), this protein is Probable CtpA-like serine protease.